A 164-amino-acid chain; its full sequence is General odorant-binding protein 1 (164 aa).

The signal sequence occupies residues 1 to 18 (MWKLVVVLTVNLLQGALT). Intrachain disulfides connect cysteine 37–cysteine 72, cysteine 68–cysteine 126, and cysteine 115–cysteine 135.

Belongs to the PBP/GOBP family. As to quaternary structure, homodimer. Antenna.

In terms of biological role, present in the aqueous fluid surrounding olfactory sensory dendrites and are thought to aid in the capture and transport of hydrophobic odorants into and through this fluid. This chain is General odorant-binding protein 1, found in Bombyx mori (Silk moth).